The sequence spans 503 residues: Splicing factor 3A subunit 3 (503 aa).

Disordered stretches follow at residues proline 296–arginine 317 and alanine 341–asparagine 384. Residues aspartate 358 to aspartate 377 show a composition bias toward acidic residues. Residues serine 360, serine 365, and serine 367 each carry the phosphoserine modification. A Matrin-type zinc finger spans residues tyrosine 408–cysteine 439.

This sequence belongs to the SF3A3 family. Probable component of a the U2 small nuclear ribonucleoproteins complex (U2 snRNP). Ubiquitous. In ovaries and testes, it is expressed in all germ and somatic cells. Highly expressed in spermatogonias and spermatocytes. Highly expressed in the germ cells of larval testes, while it is weakly expressed in fat body cells, in polyploid nuclei of salivary glands, and in larval brain.

It localises to the nucleus. In terms of biological role, probable subunit of a splicing factor complex required for 'A' complex assembly formed by the stable binding of U2 snRNP to the branchpoint sequence (BPS) in pre-mRNA. Involved in male fertility. The polypeptide is Splicing factor 3A subunit 3 (noi) (Drosophila melanogaster (Fruit fly)).